Here is a 94-residue protein sequence, read N- to C-terminus: Cystatin-A1 (94 aa).

Residues 45-49 carry the Secondary area of contact motif; the sequence is QLVAG.

The protein belongs to the cystatin family.

The protein resides in the cytoplasm. Functionally, intracellular thiol proteinase inhibitor. Inhibits papain, but not cathepsin B. This is Cystatin-A1 (cpiA) from Dictyostelium discoideum (Social amoeba).